Reading from the N-terminus, the 305-residue chain is MDETSPRSIDIESLIPNLMIIIFGLVGLTGNAIVLWLLGFCLHRNAFLVYILNLALADFLFLLCHFINSAMFLLKVPIPNGIFVYCFYTIKMVLYITGLSMLSAISTERCLSVLCPIWYHCRRPEHTSTVMCAVIWIFSVLICILKEYFCDFFGTKLGNYYVCQASNFFMGAYLMFLFVVLCLSTLALLARLFCGAEKMKFTRLFVTIMLTILVFLLCGLPWGFFWFLLIWIKGGFSVLDYRLYLASIVLTVVNSCANPIIYFFVGSFRHRLKHQTLKMVLQSALQDTPETHENMVEMSRIKAEQ.

The Extracellular portion of the chain corresponds to 1–17; sequence MDETSPRSIDIESLIPN. The chain crosses the membrane as a helical span at residues 18–38; that stretch reads LMIIIFGLVGLTGNAIVLWLL. Residues 39 to 46 lie on the Cytoplasmic side of the membrane; that stretch reads GFCLHRNA. A helical transmembrane segment spans residues 47-67; that stretch reads FLVYILNLALADFLFLLCHFI. The Extracellular segment spans residues 68-81; that stretch reads NSAMFLLKVPIPNG. Residues 82-102 traverse the membrane as a helical segment; it reads IFVYCFYTIKMVLYITGLSML. The Cytoplasmic portion of the chain corresponds to 103 to 129; that stretch reads SAISTERCLSVLCPIWYHCRRPEHTST. A helical transmembrane segment spans residues 130–150; the sequence is VMCAVIWIFSVLICILKEYFC. At 151 to 167 the chain is on the extracellular side; that stretch reads DFFGTKLGNYYVCQASN. Residues 168-188 traverse the membrane as a helical segment; sequence FFMGAYLMFLFVVLCLSTLAL. The Cytoplasmic portion of the chain corresponds to 189-211; the sequence is LARLFCGAEKMKFTRLFVTIMLT. The chain crosses the membrane as a helical span at residues 212–232; sequence ILVFLLCGLPWGFFWFLLIWI. Residues 233 to 244 are Extracellular-facing; sequence KGGFSVLDYRLY. The helical transmembrane segment at 245-265 threads the bilayer; it reads LASIVLTVVNSCANPIIYFFV. At 266–305 the chain is on the cytoplasmic side; it reads GSFRHRLKHQTLKMVLQSALQDTPETHENMVEMSRIKAEQ.

Belongs to the G-protein coupled receptor 1 family. Mas subfamily. Expressed in a subset of sensory neurons that includes nociceptors. Expressed in the subclass of non-peptidergic sensory neurons that are IB4(+) and VR1(-).

The protein resides in the cell membrane. Functionally, orphan receptor. May be a receptor for RFamide-family neuropeptides such as NPFF and NPAF, which are analgesic in vivo. May regulate nociceptor function and/or development, including the sensation or modulation of pain. The protein is Mas-related G-protein coupled receptor member A7 (Mrgpra7) of Mus musculus (Mouse).